The following is a 509-amino-acid chain: 2-succinyl-5-enolpyruvyl-6-hydroxy-3-cyclohexene-1-carboxylate synthase (509 aa).

This sequence belongs to the TPP enzyme family. MenD subfamily. In terms of assembly, homodimer. Mg(2+) is required as a cofactor. Requires Mn(2+) as cofactor. The cofactor is thiamine diphosphate.

It carries out the reaction isochorismate + 2-oxoglutarate + H(+) = 5-enolpyruvoyl-6-hydroxy-2-succinyl-cyclohex-3-ene-1-carboxylate + CO2. The protein operates within quinol/quinone metabolism; 1,4-dihydroxy-2-naphthoate biosynthesis; 1,4-dihydroxy-2-naphthoate from chorismate: step 2/7. Its pathway is quinol/quinone metabolism; menaquinone biosynthesis. Catalyzes the thiamine diphosphate-dependent decarboxylation of 2-oxoglutarate and the subsequent addition of the resulting succinic semialdehyde-thiamine pyrophosphate anion to isochorismate to yield 2-succinyl-5-enolpyruvyl-6-hydroxy-3-cyclohexene-1-carboxylate (SEPHCHC). This is 2-succinyl-5-enolpyruvyl-6-hydroxy-3-cyclohexene-1-carboxylate synthase from Corynebacterium diphtheriae (strain ATCC 700971 / NCTC 13129 / Biotype gravis).